The sequence spans 341 residues: Glycerol-3-phosphate dehydrogenase [NAD(P)+] (341 aa).

NADPH-binding residues include serine 15, tryptophan 16, arginine 36, and lysine 110. Sn-glycerol 3-phosphate is bound by residues lysine 110, glycine 139, and serine 141. Alanine 143 contacts NADPH. 5 residues coordinate sn-glycerol 3-phosphate: lysine 194, aspartate 247, serine 257, arginine 258, and asparagine 259. Lysine 194 serves as the catalytic Proton acceptor. Arginine 258 contacts NADPH. NADPH-binding residues include valine 282 and glutamate 284.

It belongs to the NAD-dependent glycerol-3-phosphate dehydrogenase family.

It is found in the cytoplasm. The catalysed reaction is sn-glycerol 3-phosphate + NAD(+) = dihydroxyacetone phosphate + NADH + H(+). It carries out the reaction sn-glycerol 3-phosphate + NADP(+) = dihydroxyacetone phosphate + NADPH + H(+). It functions in the pathway membrane lipid metabolism; glycerophospholipid metabolism. Its function is as follows. Catalyzes the reduction of the glycolytic intermediate dihydroxyacetone phosphate (DHAP) to sn-glycerol 3-phosphate (G3P), the key precursor for phospholipid synthesis. The sequence is that of Glycerol-3-phosphate dehydrogenase [NAD(P)+] from Stenotrophomonas maltophilia (strain K279a).